A 471-amino-acid chain; its full sequence is E3 SUMO-protein ligase EGR2 (471 aa).

Over residues 127–143 (PASTTASSNVTSASPNP) the composition is skewed to low complexity. A disordered region spans residues 127–177 (PASTTASSNVTSASPNPLATGPLGVCTMSQTQPDLDHLYSPPPPPPYSGCA). An N6-acetyllysine; by EP300 modification is found at Lys246. Disordered regions lie at residues 273-301 (GGPSAGTTGPGASGGSEGPRLPGSSAAAA) and 313-336 (RPILRPRKYPNRPSKTPVHERPYP). The span at 280–289 (TGPGASGGSE) shows a compositional bias: gly residues. 3 consecutive C2H2-type zinc fingers follow at residues 335–359 (YPCPAEGCDRRFSRSDELTRHIRIH), 365–387 (FQCRICMRNFSRSDHLTTHIRTH), and 393–415 (FACDYCGRKFARSDERKRHTKIH). Residues 406-471 (DERKRHTKIH…GPCSSRTRTP (66 aa)) are disordered. The span at 410-420 (RHTKIHLRQKE) shows a compositional bias: basic residues. The segment covering 424–437 (SAPSSSVPAASTAS) has biased composition (low complexity).

Belongs to the EGR C2H2-type zinc-finger protein family. Interacts with HCFC1. Interacts with WWP2. Interacts with UBC9. Interacts with CITED1. Interacts (via phosphorylated form) with SFN. In terms of processing, ubiquitinated by WWP2 leading to proteasomal degradation. Post-translationally, acetylated at Lys-246. May be deacetylated by HDAC6, HDAC10 or SIRT1.

It localises to the nucleus. The protein operates within protein modification; protein sumoylation. Sequence-specific DNA-binding transcription factor. Plays a role in hindbrain segmentation by regulating the expression of a subset of homeobox containing genes and in Schwann cell myelination by regulating the expression of genes involved in the formation and maintenance of myelin. Binds to two EGR2-consensus sites EGR2A (5'-CTGTAGGAG-3') and EGR2B (5'-ATGTAGGTG-3') in the HOXB3 enhancer and promotes HOXB3 transcriptional activation. Binds to specific DNA sites located in the promoter region of HOXA4, HOXB2 and ERBB2. Regulates hindbrain segmentation by controlling the expression of Hox genes, such as HOXA4, HOXB3 and HOXB2, and thereby specifying odd and even rhombomeres. Promotes the expression of HOXB3 in the rhombomere r5 in the hindbrain. Regulates myelination in the peripheral nervous system after birth, possibly by regulating the expression of myelin proteins, such as MPZ, and by promoting the differentiation of Schwann cells. Involved in the development of the jaw openener musculature, probably by playing a role in its innervation through trigeminal motor neurons. May play a role in adipogenesis, possibly by regulating the expression of CEBPB. Its function is as follows. E3 SUMO-protein ligase helping SUMO1 conjugation to its coregulators NAB1 and NAB2, whose sumoylation down-regulates EGR2 transcriptional activity. The sequence is that of E3 SUMO-protein ligase EGR2 (EGR2) from Sus scrofa (Pig).